We begin with the raw amino-acid sequence, 414 residues long: Na(+)-translocating NADH-quinone reductase subunit B (414 aa).

Transmembrane regions (helical) follow at residues 56-76 (IMIMVWLAVFPAMFWGMYNVG), 82-104 (ALNHLYSGAELATVISGNWHYWL), 129-149 (FLPIYATVFLVGGFWEVLFCM), and 164-184 (ILFALIVPPTLPLWQAALGIT). The residue at position 236 (threonine 236) is an FMN phosphoryl threonine. 5 helical membrane passes run 275–295 (VSTLALAIGAAFIVYMGIASW), 297–317 (IIAGVMVGMIAISTLFNVIGS), 325–345 (MPWHWHLVLGGFAFGMFFMAT), 358–378 (WAYGILIGAMCVMIRVVNPAY), and 381–401 (GMMLAILFANLFAPLFDHIVI).

Belongs to the NqrB/RnfD family. As to quaternary structure, composed of six subunits; NqrA, NqrB, NqrC, NqrD, NqrE and NqrF. The cofactor is FMN.

The protein localises to the cell inner membrane. The catalysed reaction is a ubiquinone + n Na(+)(in) + NADH + H(+) = a ubiquinol + n Na(+)(out) + NAD(+). Its function is as follows. NQR complex catalyzes the reduction of ubiquinone-1 to ubiquinol by two successive reactions, coupled with the transport of Na(+) ions from the cytoplasm to the periplasm. NqrA to NqrE are probably involved in the second step, the conversion of ubisemiquinone to ubiquinol. The protein is Na(+)-translocating NADH-quinone reductase subunit B of Vibrio anguillarum (Listonella anguillarum).